The chain runs to 253 residues: uncharacterized protein (253 aa).

Helical transmembrane passes span 17–37 (MWLL…HIIA), 46–66 (IFGF…VFVF), 93–113 (LAAS…YGIW), 139–159 (MYGL…WTVF), 172–192 (AMVL…SPLV), and 222–242 (IHLS…LLIM).

It is found in the cell membrane. This is an uncharacterized protein from Bacillus subtilis (strain 168).